Reading from the N-terminus, the 256-residue chain is MPGLKITLLQQPLVWMDGPANLRHFDRQLEGITGRDVIVLPEMFTSGFAMEAAASSLAQDDVVNWMTAKAQQCNALIAGSVALQTESGSVNRFLLVEPGGTVHFYDKRHLFRMADEHLHYKAGNARVIVEWRGWRILPLVCYDLRFPVWSRNLNDYDLALYVANWPAPRSLHWQALLTARAIENQAYVAGCNRVGSDGNGCHYRGDSRVINPQGEIIATADAHQATRIDAELSMAALREYREKFPAWQDADEFRLW.

Positions 4–234 (LKITLLQQPL…ATRIDAELSM (231 aa)) constitute a CN hydrolase domain. Glu42 (proton acceptor) is an active-site residue. Lys107 acts as the Proton donor in catalysis. The Nucleophile role is filled by Cys141.

It belongs to the carbon-nitrogen hydrolase superfamily. NIT1/NIT2 family.

The enzyme catalyses a monoamide of a dicarboxylate + H2O = a dicarboxylate + NH4(+). Its function is as follows. Hydrolyzes alpha-ketoglutaramate (a-KGM) to alpha-ketoglutarate (alpha-KG) and ammonia, has weak activity on L-glutamine, almost no activity on deaminated glutathione (dGSH) and none on glutathione. May function as a metabolite repair enzyme. This is Omega-amidase YafV (yafV) from Escherichia coli (strain K12).